A 261-amino-acid polypeptide reads, in one-letter code: 5'-nucleotidase SurE (261 aa).

Residues Asp17, Asp18, Ser48, and Asn104 each contribute to the a divalent metal cation site.

The protein belongs to the SurE nucleotidase family. The cofactor is a divalent metal cation.

Its subcellular location is the cytoplasm. It carries out the reaction a ribonucleoside 5'-phosphate + H2O = a ribonucleoside + phosphate. In terms of biological role, nucleotidase that shows phosphatase activity on nucleoside 5'-monophosphates. The protein is 5'-nucleotidase SurE of Deinococcus geothermalis (strain DSM 11300 / CIP 105573 / AG-3a).